A 210-amino-acid chain; its full sequence is Transposable element activator uncharacterized 23 kDa protein (210 aa).

The segment covering 67–78 (SGRMGGPRRDGR) has biased composition (basic and acidic residues). The tract at residues 67 to 87 (SGRMGGPRRDGRVASSGVEGG) is disordered.

This chain is Transposable element activator uncharacterized 23 kDa protein, found in Zea mays (Maize).